The chain runs to 167 residues: UPF0178 protein bll3966 (167 aa).

It belongs to the UPF0178 family.

The chain is UPF0178 protein bll3966 from Bradyrhizobium diazoefficiens (strain JCM 10833 / BCRC 13528 / IAM 13628 / NBRC 14792 / USDA 110).